We begin with the raw amino-acid sequence, 473 residues long: H(+)/Cl(-) exchange transporter ClcA (473 aa).

Residues 1 to 32 (MKTDTSTFLAQQIVRLRRRDQIRRLMQRDKTP) lie on the Cytoplasmic side of the membrane. Residues 33-69 (LAILFMAAVVGTLTGLVGVAFEKAVSWVQNMRIGALV) traverse the membrane as a helical segment. The Periplasmic segment spans residues 70–76 (QVADHAF). A helical transmembrane segment spans residues 77-100 (LLWPLAFILSALLAMVGYFLVRKF). Positions 106-110 (GSGIP) match the Selectivity filter part_1 motif. Residue Ser107 participates in chloride binding. The helical intramembrane region spans 109–116 (IPEIEGAL). The Cytoplasmic portion of the chain corresponds to 117–123 (EELRPVR). 2 consecutive transmembrane segments (helical) span residues 124–141 (WWRV…TLGA) and 148–166 (EGPT…LDVF). The Selectivity filter part_2 motif lies at 146-150 (GREGP). At 167–176 (RMRSAEARHT) the chain is on the cytoplasmic side. 2 consecutive intramembrane regions (helical) follow at residues 177–189 (LLAT…LSAA) and 193–201 (PLAGILFII). Residues 202–214 (EEMRPQFRYNLIS) lie on the Cytoplasmic side of the membrane. The helical transmembrane segment at 215–232 (IKAVFTGVIMSSIVFRIF) threads the bilayer. The Periplasmic portion of the chain corresponds to 233–252 (NGEAPIIEVGKLSDAPVNTL). Residues 253–281 (WLYLILGIIFGCVGPVFNSLVLRTQDMFQ) traverse the membrane as a helical segment. Residues 282 to 287 (RFHGGE) lie on the Cytoplasmic side of the membrane. A helical membrane pass occupies residues 288 to 309 (IKKWVLMGGAIGGLCGILGLIE). The Periplasmic segment spans residues 310–329 (PEAAGGGFNLIPIAAAGNFS). 2 consecutive transmembrane segments (helical) span residues 330–349 (VGLL…LCFS) and 355–376 (GIFA…MAAA). The Selectivity filter part_3 motif lies at 355–359 (GIFAP). Ile356 and Phe357 together coordinate chloride. The Periplasmic segment spans residues 377–386 (VLFPQYHLEA). An intramembrane region (helical) is located at residues 387 to 401 (GTFAIAGMGALMAAS). The note=Loop between two helices intramembrane region spans 402-404 (VRA). The segment at residues 405–416 (PLTGIVLVLEMT) is an intramembrane region (helical). Positions 417–421 (DNYQL) form an intramembrane region, note=Loop between two helices. The helical transmembrane segment at 422 to 438 (ILPMIITCLGATLLAQF) threads the bilayer. Residues 439 to 473 (LGGKPLYSTILARTLAKQDAEQAAKNQNAPAGENT) are Cytoplasmic-facing. Tyr445 lines the chloride pocket.

This sequence belongs to the chloride channel (TC 2.A.49) family. ClcA subfamily. In terms of assembly, homodimer.

The protein resides in the cell inner membrane. It catalyses the reaction 2 chloride(in) + H(+)(out) = 2 chloride(out) + H(+)(in). Functionally, proton-coupled chloride transporter. Functions as antiport system and exchanges two chloride ions for 1 proton. Probably acts as an electrical shunt for an outwardly-directed proton pump that is linked to amino acid decarboxylation, as part of the extreme acid resistance (XAR) response. The protein is H(+)/Cl(-) exchange transporter ClcA of Salmonella agona (strain SL483).